The primary structure comprises 271 residues: Formamidopyrimidine-DNA glycosylase (271 aa).

Pro2 serves as the catalytic Schiff-base intermediate with DNA. Glu3 functions as the Proton donor in the catalytic mechanism. Catalysis depends on Lys58, which acts as the Proton donor; for beta-elimination activity. DNA contacts are provided by His92, Arg111, and Arg152. The FPG-type zinc finger occupies 237–271 (FVYGRQQQPCKQCGSLLRQTTIRQRTTVWCGHCQG). Arg261 (proton donor; for delta-elimination activity) is an active-site residue.

The protein belongs to the FPG family. As to quaternary structure, monomer. It depends on Zn(2+) as a cofactor.

It carries out the reaction Hydrolysis of DNA containing ring-opened 7-methylguanine residues, releasing 2,6-diamino-4-hydroxy-5-(N-methyl)formamidopyrimidine.. The enzyme catalyses 2'-deoxyribonucleotide-(2'-deoxyribose 5'-phosphate)-2'-deoxyribonucleotide-DNA = a 3'-end 2'-deoxyribonucleotide-(2,3-dehydro-2,3-deoxyribose 5'-phosphate)-DNA + a 5'-end 5'-phospho-2'-deoxyribonucleoside-DNA + H(+). In terms of biological role, involved in base excision repair of DNA damaged by oxidation or by mutagenic agents. Acts as a DNA glycosylase that recognizes and removes damaged bases. Has a preference for oxidized purines, such as 7,8-dihydro-8-oxoguanine (8-oxoG). Has AP (apurinic/apyrimidinic) lyase activity and introduces nicks in the DNA strand. Cleaves the DNA backbone by beta-delta elimination to generate a single-strand break at the site of the removed base with both 3'- and 5'-phosphates. The polypeptide is Formamidopyrimidine-DNA glycosylase (mutM1) (Xylella fastidiosa (strain 9a5c)).